The primary structure comprises 122 residues: Prefoldin subunit 1 (122 aa).

An N-acetylalanine modification is found at Ala2.

The protein belongs to the prefoldin subunit beta family. Heterohexamer of two PFD-alpha type and four PFD-beta type subunits.

In terms of biological role, binds specifically to cytosolic chaperonin (c-CPN) and transfers target proteins to it. Binds to nascent polypeptide chain and promotes folding in an environment in which there are many competing pathways for nonnative proteins. In Mus musculus (Mouse), this protein is Prefoldin subunit 1 (Pfdn1).